Reading from the N-terminus, the 423-residue chain is Dihydrolipoyllysine-residue succinyltransferase component of 2-oxoglutarate dehydrogenase complex (423 aa).

In terms of domain architecture, Lipoyl-binding spans 1 to 76; it reads MPEVKVPELA…EVGQAIAVIG (76 aa). At K42 the chain carries N6-lipoyllysine. Positions 76-185 are disordered; it reads GEGSGNASKE…APAKEEKKYN (110 aa). A compositionally biased stretch (polar residues) spans 80–96; that stretch reads GNASKENSNDNTPQQND. Residues 99–115 are compositionally biased toward basic and acidic residues; sequence TNNKKEETTNKSADKAE. A compositionally biased stretch (polar residues) spans 116–131; it reads VNQTNDDNQQRVNATP. In terms of domain architecture, Peripheral subunit-binding (PSBD) spans 128-164; the sequence is NATPSARRYARENGVNLAEVSPKTNDVVRKEDIDKKQ. The segment covering 153–164 has biased composition (basic and acidic residues); sequence DVVRKEDIDKKQ. The span at 165-177 shows a compositional bias: low complexity; sequence QAPASTQTTQQAP. Residues H394 and D398 contribute to the active site.

Belongs to the 2-oxoacid dehydrogenase family. In terms of assembly, forms a 24-polypeptide structural core with octahedral symmetry. Part of the 2-oxoglutarate dehydrogenase (OGDH) complex composed of E1 (2-oxoglutarate dehydrogenase), E2 (dihydrolipoamide succinyltransferase) and E3 (dihydrolipoamide dehydrogenase); the complex contains multiple copies of the three enzymatic components (E1, E2 and E3). Requires (R)-lipoate as cofactor.

It catalyses the reaction N(6)-[(R)-dihydrolipoyl]-L-lysyl-[protein] + succinyl-CoA = N(6)-[(R)-S(8)-succinyldihydrolipoyl]-L-lysyl-[protein] + CoA. It participates in amino-acid degradation; L-lysine degradation via saccharopine pathway; glutaryl-CoA from L-lysine: step 6/6. E2 component of the 2-oxoglutarate dehydrogenase (OGDH) complex which catalyzes the second step in the conversion of 2-oxoglutarate to succinyl-CoA and CO(2). This chain is Dihydrolipoyllysine-residue succinyltransferase component of 2-oxoglutarate dehydrogenase complex (odhB), found in Staphylococcus aureus (strain MRSA252).